The chain runs to 452 residues: Phosphoglucosamine mutase (452 aa).

S104 acts as the Phosphoserine intermediate in catalysis. 4 residues coordinate Mg(2+): S104, D245, D247, and D249. Residue S104 is modified to Phosphoserine.

The protein belongs to the phosphohexose mutase family. It depends on Mg(2+) as a cofactor. In terms of processing, activated by phosphorylation.

It carries out the reaction alpha-D-glucosamine 1-phosphate = D-glucosamine 6-phosphate. Its function is as follows. Catalyzes the conversion of glucosamine-6-phosphate to glucosamine-1-phosphate. The protein is Phosphoglucosamine mutase of Gluconacetobacter diazotrophicus (strain ATCC 49037 / DSM 5601 / CCUG 37298 / CIP 103539 / LMG 7603 / PAl5).